The chain runs to 263 residues: Microtubule-associated protein RP/EB family member 1 (263 aa).

The 103-residue stretch at 14 to 116 folds into the Calponin-homology (CH) domain; the sequence is NLSRHDMLAW…FVQWFKKFFD (103 aa). The EB1 C-terminal domain occupies 180–250; that stretch reads KKAAGDDESA…LYATDEGFVI (71 aa).

This sequence belongs to the MAPRE family.

It is found in the cytoplasm. The protein resides in the cytoskeleton. It localises to the microtubule organizing center. Its subcellular location is the centrosome. The protein localises to the golgi apparatus. It is found in the spindle. The protein resides in the spindle pole. Plus-end tracking protein (+TIP) that binds to the plus-end of microtubules and regulates the dynamics of the microtubule cytoskeleton. Promotes cytoplasmic microtubule nucleation and elongation. Involved in mitotic spindle positioning by stabilizing microtubules and promoting dynamic connection between astral microtubules and the cortex during mitotic chromosome segregation. The chain is Microtubule-associated protein RP/EB family member 1 (MAPRE1) from Coturnix coturnix (Common quail).